The following is a 463-amino-acid chain: Retinoic acid receptor RXR-gamma (463 aa).

Residues 1 to 138 (MYGNYSHFMK…TSPGSLVKHI (138 aa)) form a modulating region. Residues 17 to 53 (GSPGHSGSTSMSPSAALSTGKPMDSHPSYTDTPVSAP) are disordered. Residues 21–33 (HSGSTSMSPSAAL) are compositionally biased toward polar residues. 2 consecutive NR C4-type zinc fingers follow at residues 139–159 (CAIC…CEGC) and 175–199 (CRDN…YQKC). Positions 139–204 (CAICGDRSSG…RYQKCLVMGM (66 aa)) form a DNA-binding region, nuclear receptor. Positions 205–230 (KREAVQEERQRSRERAESEAECASSG) are hinge. Over residues 211–222 (EERQRSRERAES) the composition is skewed to basic and acidic residues. The segment at 211 to 232 (EERQRSRERAESEAECASSGHE) is disordered. In terms of domain architecture, NR LBD spans 231-459 (HEDMPVERIL…TFLMEMLETP (229 aa)).

It belongs to the nuclear hormone receptor family. NR2 subfamily. In terms of assembly, homodimer. Heterodimer with a RAR molecule. Binds DNA preferentially as a RAR/RXR heterodimer. Interacts with RARA. In terms of processing, acetylated by EP300.

The protein localises to the nucleus. Its subcellular location is the cytoplasm. Receptor for retinoic acid. Retinoic acid receptors bind as heterodimers to their target response elements in response to their ligands, all-trans or 9-cis retinoic acid, and regulate gene expression in various biological processes. The RAR/RXR heterodimers bind to the retinoic acid response elements (RARE) composed of tandem 5'-AGGTCA-3' sites known as DR1-DR5. The high affinity ligand for RXRs is 9-cis retinoic acid. The polypeptide is Retinoic acid receptor RXR-gamma (RXRG) (Sus scrofa (Pig)).